A 71-amino-acid polypeptide reads, in one-letter code: MRTLCSLLLICCLLFSYDTPVVGELKHLGLKTEFEQCQRIRGYCLNTYCRFPTSHVGSCYPEKRYCCKNIR.

Positions 1–23 are cleaved as a signal peptide; it reads MRTLCSLLLICCLLFSYDTPVVG. Disulfide bonds link cysteine 37–cysteine 66, cysteine 44–cysteine 59, and cysteine 49–cysteine 67.

The protein belongs to the beta-defensin family.

Its subcellular location is the secreted. Functionally, has antibacterial activity. The sequence is that of Beta-defensin 9 (Defb9) from Rattus norvegicus (Rat).